The following is a 130-amino-acid chain: Methylglyoxal synthase (130 aa).

Residues 1–130 (MSKPRIALIA…DLARNMQDVC (130 aa)) enclose the MGS-like domain. Substrate contacts are provided by residues His11, Lys15, 37 to 40 (TGTT), and 57 to 58 (SG). The Proton donor/acceptor role is filled by Asp63. His90 contacts substrate.

The protein belongs to the methylglyoxal synthase family.

The catalysed reaction is dihydroxyacetone phosphate = methylglyoxal + phosphate. Catalyzes the formation of methylglyoxal from dihydroxyacetone phosphate. The chain is Methylglyoxal synthase from Burkholderia vietnamiensis (strain G4 / LMG 22486) (Burkholderia cepacia (strain R1808)).